The sequence spans 150 residues: UPF0756 membrane protein plu2726 (150 aa).

4 helical membrane passes run 8–28 (LLVL…TVTL), 51–71 (YGLT…IASG), 88–108 (LLAI…VSLM), and 123–143 (VLGV…AGIL).

It belongs to the UPF0756 family.

The protein localises to the cell membrane. This is UPF0756 membrane protein plu2726 from Photorhabdus laumondii subsp. laumondii (strain DSM 15139 / CIP 105565 / TT01) (Photorhabdus luminescens subsp. laumondii).